A 93-amino-acid chain; its full sequence is uncharacterized protein (93 aa).

Residues 1 to 76 form the Sm domain; the sequence is MDSHTTEKRR…IQTIEPDESM (76 aa).

Part of the core SMN complex at least composed of smn1, yip11/gem2, gem6, gem7 and gem8. Interacts with gem7; the interaction is direct.

In terms of biological role, the SMN complex catalyzes the assembly of small nuclear ribonucleoproteins (snRNPs), the building blocks of the spliceosome, and thereby plays an important role in the splicing of cellular pre-mRNAs. Most spliceosomal snRNPs contain a common set of Sm proteins smb1, smd1, smd2, smd3, sme1, smf1 and smg1 that assemble in a heptameric protein ring on the Sm site of the small nuclear RNA to form the core snRNP (Sm core). In the cytosol, the Sm proteins smd1, smd2, sme1, smf1 and smg1 (5Sm) are trapped in an inactive 6S pICln-Sm complex by the chaperone saf5. To complete assembly of core snRNPs, the SMN complex accepts 5Sm from saf5. Binding of snRNA inside 5Sm triggers eviction of the SMN complex, thereby allowing binding of smd3 and smb1 to complete assembly of the core snRNP. This is an uncharacterized protein from Schizosaccharomyces pombe (strain 972 / ATCC 24843) (Fission yeast).